A 119-amino-acid chain; its full sequence is Acidic phospholipase A2 2 (119 aa).

7 cysteine pairs are disulfide-bonded: cysteine 11–cysteine 71, cysteine 26–cysteine 118, cysteine 28–cysteine 44, cysteine 43–cysteine 99, cysteine 50–cysteine 92, cysteine 60–cysteine 85, and cysteine 78–cysteine 90. Tyrosine 27, glycine 29, and glycine 31 together coordinate Ca(2+). Residue histidine 47 is part of the active site. Aspartate 48 serves as a coordination point for Ca(2+). The active site involves aspartate 93.

This sequence belongs to the phospholipase A2 family. Group I subfamily. D49 sub-subfamily. Homotrimer. Requires Ca(2+) as cofactor. Expressed by the venom gland.

The protein localises to the secreted. The enzyme catalyses a 1,2-diacyl-sn-glycero-3-phosphocholine + H2O = a 1-acyl-sn-glycero-3-phosphocholine + a fatty acid + H(+). Functionally, PLA2 catalyzes the calcium-dependent hydrolysis of the 2-acyl groups in 3-sn-phosphoglycerides. This chain is Acidic phospholipase A2 2, found in Naja naja (Indian cobra).